A 223-amino-acid polypeptide reads, in one-letter code: Transmembrane protein 235 (223 aa).

Positions 1–28 are cleaved as a signal peptide; sequence MARLGALLLAAALGALLSFALLAAAVAS. Asn41 is a glycosylation site (N-linked (GlcNAc...) asparagine). The next 3 membrane-spanning stretches (helical) occupy residues 96 to 116, 126 to 146, and 176 to 196; these read VIVV…CGLL, LLFT…GVSI, and WSMA…TLLL.

This sequence belongs to the PMP-22/EMP/MP20 family. Post-translationally, N-glycosylated.

The protein resides in the membrane. Its subcellular location is the endoplasmic reticulum. The chain is Transmembrane protein 235 (TMEM235) from Homo sapiens (Human).